The primary structure comprises 148 residues: Receptor activity-modifying protein 3 (148 aa).

A signal peptide spans 1-23 (METGALRRPQLLPLLLLLCGGCP). Residues 24 to 113 (RAGGCNETGM…CTVDRVHLED (90 aa)) are Extracellular-facing. N-linked (GlcNAc...) asparagine glycosylation is found at N29, N58, N71, and N103. 2 disulfides stabilise this stretch: C40/C72 and C57/C104. A helical transmembrane segment spans residues 114–138 (PPDEVLIPLIVIPVVLTVAMAGLVV). The Cytoplasmic segment spans residues 139–148 (WRSKRTDTLL).

This sequence belongs to the RAMP family. Heterodimer of CALCRL and RAMP3; interaction induces allosteric modulation of CALCRL function and ligand specificity for adrenomedullin/ADM and intermedin/ADM2. Heterodimer of CALCR and RAMP3; interaction form the receptor complex AMYR3 for amylin/IAPP. Interacts with GPER1. Strongly expressed in lung, breast, immune system and fetal tissues.

The protein resides in the cell membrane. It localises to the membrane. Accessory protein that interacts with and modulates the function of G-protein coupled receptors including calcitonin gene-related peptide type 1 receptor (CALCRL), calcitonin receptor (CALCR) and G-protein coupled estrogen receptor 1 (GPER1). Required for the transport of CALCRL and GPER1 receptors to the plasma membrane. Plays a role in cardioprotection by reducing cardiac hypertrophy and perivascular fibrosis in a GPER1-dependent manner. Together with CALCRL, form a receptor complex for adrenomedullin/ADM and intermedin/ADM2. Together with CALCR, act as a receptor complex for amylin/IAPP. In Homo sapiens (Human), this protein is Receptor activity-modifying protein 3.